A 189-amino-acid chain; its full sequence is Protein seele (189 aa).

The signal sequence occupies residues 1–17 (MLTKALILFGLLALAQG). A Saposin B-type domain is found at 23–176 (REVKCHVCKA…EQASYCDESP (154 aa)). 3 cysteine pairs are disulfide-bonded: cysteine 27–cysteine 172, cysteine 30–cysteine 165, and cysteine 85–cysteine 136. Residues 186–189 (KEEL) carry the Prevents secretion from ER motif.

The protein belongs to the canopy family.

The protein localises to the endoplasmic reticulum. Its function is as follows. Involved in embryonic dorsal-ventral patterning which is generated by a series of serine protease processing events where gd processes snk which cleaves ea which then processes spz into the activating ligand for the Toll receptor. Required during this process for the secretion of ea from the developing embryo into the perivitelline space and for ea processing. The sequence is that of Protein seele from Drosophila melanogaster (Fruit fly).